A 283-amino-acid polypeptide reads, in one-letter code: Pantothenate synthetase (283 aa).

34 to 41 (MGALHDGH) is a binding site for ATP. His-41 acts as the Proton donor in catalysis. A (R)-pantoate-binding site is contributed by Gln-65. Gln-65 lines the beta-alanine pocket. ATP is bound at residue 152–155 (GEKD). Gln-158 serves as a coordination point for (R)-pantoate. Residues Val-181 and 189–192 (MSSR) each bind ATP.

This sequence belongs to the pantothenate synthetase family. Homodimer.

Its subcellular location is the cytoplasm. It catalyses the reaction (R)-pantoate + beta-alanine + ATP = (R)-pantothenate + AMP + diphosphate + H(+). Its pathway is cofactor biosynthesis; (R)-pantothenate biosynthesis; (R)-pantothenate from (R)-pantoate and beta-alanine: step 1/1. In terms of biological role, catalyzes the condensation of pantoate with beta-alanine in an ATP-dependent reaction via a pantoyl-adenylate intermediate. In Rhodopseudomonas palustris (strain BisB18), this protein is Pantothenate synthetase.